Consider the following 418-residue polypeptide: Cyclin-dependent kinase 15 (418 aa).

Residues 84-369 (YLNLEKLGEG…AQDALLHPYF (286 aa)) form the Protein kinase domain. ATP-binding positions include 90 to 98 (LGEGTYATV) and Lys-113. Asp-205 acts as the Proton acceptor in catalysis.

This sequence belongs to the protein kinase superfamily. CMGC Ser/Thr protein kinase family. CDC2/CDKX subfamily. Mg(2+) serves as cofactor.

The catalysed reaction is L-seryl-[protein] + ATP = O-phospho-L-seryl-[protein] + ADP + H(+). It carries out the reaction L-threonyl-[protein] + ATP = O-phospho-L-threonyl-[protein] + ADP + H(+). In terms of biological role, serine/threonine-protein kinase involved in the control of the eukaryotic cell cycle, whose activity is controlled by an associated cyclin. The protein is Cyclin-dependent kinase 15 (cdk15) of Danio rerio (Zebrafish).